A 467-amino-acid chain; its full sequence is E3 ubiquitin-protein ligase TRIM11 (467 aa).

The RING-type zinc finger occupies 16–57 (CAICLDYFTDPVMTDCGHNFCRECIRRCWGQPEGPYACPECR). Serine 85 carries the post-translational modification Phosphoserine. The B box-type zinc-finger motif lies at 87-127 (VPQGVCAAHREPLTTFCGDDLSLLCPTCERSEHWAHRVRPL). Cysteine 92, histidine 95, cysteine 114, and histidine 119 together coordinate Zn(2+). A coiled-coil region spans residues 127-207 (LQEAADDLKG…KLEEEELEVL (81 aa)). Residues 267-460 (ELRTVCRVPG…MTICRLIGVS (194 aa)) form the B30.2/SPRY domain. Positions 304 to 313 (DRRSVQRGEQ) are enriched in basic and acidic residues. Residues 304–325 (DRRSVQRGEQRQALPDSPERFD) form a disordered region.

It belongs to the TRIM/RBCC family. Binds cytoplasmic tail of integrin alpha-1. Interacts with the HN peptide. Interacts with PHOX2B. Interacts (when autoubiquitinated) with SQSTM1/p62; promoting AIM2 recruitment to autophagosomes. Interacts with AIM2; promoting its autophagy-dependent degradation. Autoubiquitinated upon DNA stimulation; autoubiquitination promotes interaction with SQSTM1/p62 and recruitment of AIM2 to autophagosomes.

The protein resides in the cytoplasm. Its subcellular location is the nucleus. The catalysed reaction is S-ubiquitinyl-[E2 ubiquitin-conjugating enzyme]-L-cysteine + [acceptor protein]-L-lysine = [E2 ubiquitin-conjugating enzyme]-L-cysteine + N(6)-ubiquitinyl-[acceptor protein]-L-lysine.. Its pathway is protein modification; protein ubiquitination. Functionally, E3 ubiquitin-protein ligase that promotes the degradation of insoluble ubiquitinated proteins, including insoluble PAX6, poly-Gln repeat expanded HTT and poly-Ala repeat expanded ARX. Mediates PAX6 ubiquitination leading to proteasomal degradation, thereby modulating cortical neurogenesis. May also inhibit PAX6 transcriptional activity, possibly in part by preventing the binding of PAX6 to its consensus sequences. May contribute to the regulation of the intracellular level of HN (humanin) or HN-containing proteins through the proteasomal degradation pathway. Mediates MED15 ubiquitination leading to proteasomal degradation. May contribute to the innate restriction of retroviruses. Upon overexpression, reduces HIV-1 and murine leukemia virus infectivity, by suppressing viral gene expression. Antiviral activity depends on a functional E3 ubiquitin-protein ligase domain. May regulate TRIM5 turnover via the proteasome pathway, thus counteracting the TRIM5-mediated cross-species restriction of retroviral infection at early stages of the retroviral life cycle. Acts as an inhibitor of the AIM2 inflammasome by promoting autophagy-dependent degradation of AIM2. Mechanistically, undergoes autoubiquitination upon DNA stimulation, promoting interaction with AIM2 and SQSTM1/p62, leading to AIM2 recruitment to autophagosomes. The protein is E3 ubiquitin-protein ligase TRIM11 (Trim11) of Rattus norvegicus (Rat).